The following is a 371-amino-acid chain: Glycosyltransferase 8 domain-containing protein 1 (371 aa).

Residues 1–7 (MSFRKVH) lie on the Cytoplasmic side of the membrane. A helical; Signal-anchor for type II membrane protein membrane pass occupies residues 8-28 (IAIILLAAVVFLLILHHNILG). Residues 29 to 371 (LTDILTRQSS…RRHGEADGTK (343 aa)) lie on the Lumenal side of the membrane. N-linked (GlcNAc...) asparagine glycosylation is found at asparagine 104, asparagine 249, and asparagine 257.

Belongs to the glycosyltransferase 8 family.

It localises to the membrane. This Xenopus tropicalis (Western clawed frog) protein is Glycosyltransferase 8 domain-containing protein 1 (glt8d1).